The chain runs to 376 residues: tRNA-aminoacylation cofactor ARC1 (376 aa).

The interval 22–46 is interaction with methionyl-tRNA synthetase MES1; the sequence is KEQSAQAAQWESVLKSGQIQPHLDQ. 2 interaction with glutamyl-tRNA synthetase GUS1 regions span residues 52 to 61 and 91 to 121; these read RDNTFIVSTL and TYTT…EINH. Residues 133 to 206 form a disordered region; it reads KKKAPAGGAA…QNKAPEKPKP (74 aa). Residues 146–180 are compositionally biased toward basic and acidic residues; the sequence is AKADEDVSKKAKKQDHPRGKPDEETLKKLREEAKA. A compositionally biased stretch (low complexity) spans 186–199; sequence KAANAKQQQEQQNK. The 103-residue stretch at 205-307 folds into the tRNA-binding domain; sequence KPSAIDFRVG…KDSKAGDKVF (103 aa).

The protein belongs to the tRNA-aminoacylation cofactor ARC1 family. As to quaternary structure, component of a yeast aminoacyl-tRNA synthase (aaRS) complex formed by methionyl-tRNA synthase MES1, glutamyl-tRNA synthase GUS1 and the tRNA aminoacylation cofactor ARC1 in a stoichiometric complex. Interacts (via N-ter) with MES1 (via N-ter) and GUS1 (via N-ter). Can also form a stable binary complex with either MES1 or GUS1 that is functional in terms of aminoacylation.

It is found in the cytoplasm. Binds to tRNA and functions as a cofactor for the methionyl-tRNA synthetase (MetRS) and glutamyl-tRNA synthetase (GluRS). Forms a complex with MetRS and GluRS and increases their affinity for cognate tRNAs due to the presence of a tRNA binding domain in its middle and C-terminal part. Binds specifically G4 quadruplex nucleic acid structures (these are four-stranded right-handed helices, stabilized by guanine base quartets). Also required for cytoplasmic confinement of the synthetases and tRNA. The sequence is that of tRNA-aminoacylation cofactor ARC1 (ARC1) from Saccharomyces cerevisiae (strain ATCC 204508 / S288c) (Baker's yeast).